Reading from the N-terminus, the 104-residue chain is Chitin-binding protein 2 (104 aa).

As to quaternary structure, oligomer in an unreduced state. Glycosylated.

Chitin-binding protein. Has antifungal activity against C.krusei, C.albicans, C.tropicalis and C.parapsilosis. Inhibits C.albicans by increasing cell membrane permeability and production of reactive oxygen species. Has no hemagglutinating activity. The sequence is that of Chitin-binding protein 2 from Moringa oleifera (Horseradish tree).